The chain runs to 5088 residues: Replicase polyprotein 1ab (5088 aa).

The chain crosses the membrane as a helical span at residues valine 26–isoleucine 46. The disordered stretch occupies residues glutamate 301–glutamine 323. A run of 5 helical transmembrane segments spans residues histidine 343–threonine 363, glycine 1132–isoleucine 1152, threonine 1156–leucine 1176, tyrosine 1201–isoleucine 1221, and isoleucine 1250–valine 1270. Catalysis depends on for 3C-like proteinase residues histidine 1434 and cysteine 1539. Transmembrane regions (helical) follow at residues phenylalanine 1729 to valine 1749 and isoleucine 1758 to valine 1778. The disordered stretch occupies residues lysine 3093–alanine 3112. The 266-residue stretch at methionine 4351 to valine 4616 folds into the ExoN domain. Active-site residues include aspartate 4362, glutamate 4364, and aspartate 4481. Zn(2+) is bound by residues cysteine 4498, cysteine 4504, cysteine 4522, and histidine 4525. Active-site residues include histidine 4599, aspartate 4604, lysine 4880, aspartate 4969, lysine 4998, and glutamate 5035. In terms of domain architecture, Nidovirus-type SAM-dependent 2'-O-MTase spans leucine 4844–lysine 5088.

Homodimer. Post-translationally, specific enzymatic cleavages in vivo by its own protease yield mature proteins. 3CL-PRO is autocatalytically processed.

The protein localises to the membrane. The enzyme catalyses a 5'-end (5'-triphosphoguanosine)-ribonucleoside in mRNA + S-adenosyl-L-methionine = a 5'-end (N(7)-methyl 5'-triphosphoguanosine)-ribonucleoside in mRNA + S-adenosyl-L-homocysteine. It carries out the reaction RNA(n) + a ribonucleoside 5'-triphosphate = RNA(n+1) + diphosphate. It catalyses the reaction ATP + H2O = ADP + phosphate + H(+). The catalysed reaction is a 5'-end (N(7)-methyl 5'-triphosphoguanosine)-ribonucleoside in mRNA + S-adenosyl-L-methionine = a 5'-end (N(7)-methyl 5'-triphosphoguanosine)-(2'-O-methyl-ribonucleoside) in mRNA + S-adenosyl-L-homocysteine + H(+). Cysteine protease responsible for the majority of cleavages of the polyprotein. Recognizes substrates containing the core sequence [NT]-[EHKQSY]-|-[AGNST]. In terms of biological role, the helicase which contains a zinc finger structure displays RNA and DNA duplex-unwinding activities with 5' to 3' polarity. Its function is as follows. RNA-directed RNA polymerase that catalyzes the transcription of viral genomic and subgenomic RNAs. Functionally, catalyzes the RNA N7-guanylyltransferase reaction to methylate the core cap structure GpppN-RNA into the type-0 cap (m)GpppN-RNA. This chain is Replicase polyprotein 1ab, found in Ochlerotatus harrisoni (CAVV).